Reading from the N-terminus, the 438-residue chain is Serine/threonine exchanger SteT (438 aa).

The Cytoplasmic segment spans residues 1-11 (MHTEDNGLKKE). The chain crosses the membrane as a helical span at residues 12–32 (IGLLFALTLVIGTIIGSGVFM). The Extracellular portion of the chain corresponds to 33–45 (KPGAVLAYSGDSK). The chain crosses the membrane as a helical span at residues 46–66 (MALFAWLLGGILTLAGGLTIA). Residues 67-98 (EIGTQIPKTGGLYTYLEEVYGEFWGFLCGWVQ) lie on the Cytoplasmic side of the membrane. The chain crosses the membrane as a helical span at residues 99–119 (IIIYGPAIIGALGLYFGSLMA). The Extracellular portion of the chain corresponds to 120–126 (NLFGWGS). The helical transmembrane segment at 127-147 (GLSKVIGIIAVLFLCVINIIG) threads the bilayer. Residues 148–151 (TKYG) lie on the Cytoplasmic side of the membrane. Residues 152–172 (GFVQTLTTIGKLIPIACIIVF) traverse the membrane as a helical segment. The Extracellular segment spans residues 173–193 (GLWKGDQHIFTAVNESISDMN). The chain crosses the membrane as a helical span at residues 194–214 (FGAAILATLFAYDGWILLAAL). The Cytoplasmic portion of the chain corresponds to 215 to 230 (GGEMKNPEKLLPRAMT). A helical transmembrane segment spans residues 231–251 (GGLLIVTAIYIFINFALLHIL). Topologically, residues 252-269 (SANEIVTLGENATSTAAT) are extracellular. A helical membrane pass occupies residues 270-290 (MLFGSIGGKLISVGIIVSIFG). Residues 291–327 (CLNGKVLSFPRVSFAMAERKQLPFAEKLSHVHPSFRT) are Cytoplasmic-facing. Residues 328–348 (PWIAISFQIALALIMMLISNP) traverse the membrane as a helical segment. At 349–352 (DKLS) the chain is on the extracellular side. Residues 353–373 (EISIFMIYIFYVMAFFAVFIL) traverse the membrane as a helical segment. Over 374–388 (RKRAKGEKRAYSVPL) the chain is Cytoplasmic. The helical transmembrane segment at 389–409 (YPFMPILAIAGSFFVLGSTLI) threads the bilayer. Residues 410-411 (TD) lie on the Extracellular side of the membrane. The chain crosses the membrane as a helical span at residues 412–432 (TMSCGLSILIGLAGLPVYYGM). The Cytoplasmic segment spans residues 433–438 (KKRKAS).

It belongs to the amino acid-polyamine-organocation (APC) superfamily. L-type amino acid transporter (LAT) (TC 2.A.3.8) family. In terms of assembly, monomer.

The protein resides in the cell membrane. In terms of biological role, exhibits an obligate exchange activity for serine, threonine and aromatic amino acids. The protein is Serine/threonine exchanger SteT (steT) of Bacillus subtilis (strain 168).